Consider the following 195-residue polypeptide: Imidazoleglycerol-phosphate dehydratase (195 aa).

Belongs to the imidazoleglycerol-phosphate dehydratase family.

It localises to the cytoplasm. It catalyses the reaction D-erythro-1-(imidazol-4-yl)glycerol 3-phosphate = 3-(imidazol-4-yl)-2-oxopropyl phosphate + H2O. It participates in amino-acid biosynthesis; L-histidine biosynthesis; L-histidine from 5-phospho-alpha-D-ribose 1-diphosphate: step 6/9. The chain is Imidazoleglycerol-phosphate dehydratase from Bacillus cytotoxicus (strain DSM 22905 / CIP 110041 / 391-98 / NVH 391-98).